The sequence spans 336 residues: Foldase protein PrsA (336 aa).

Residues 1–22 (MKSAKKLLSVLCLGIFILTFTA) form the signal peptide. The N-palmitoyl cysteine moiety is linked to residue cysteine 23. Cysteine 23 carries the S-diacylglycerol cysteine lipid modification. The region spanning 194-286 (PNTMNVSHIL…WGYHIIKVNS (93 aa)) is the PpiC domain.

The protein belongs to the PrsA family.

It localises to the cell membrane. The enzyme catalyses [protein]-peptidylproline (omega=180) = [protein]-peptidylproline (omega=0). In terms of biological role, plays a major role in protein secretion by helping the post-translocational extracellular folding of several secreted proteins. The sequence is that of Foldase protein PrsA from Clostridium botulinum (strain ATCC 19397 / Type A).